The sequence spans 395 residues: Phosphoglycerate kinase (395 aa).

Residues 20 to 22, R36, 59 to 62, R120, and R157 each bind substrate; these read DFN and HLGR. Residues K208, G296, E327, and 353-356 contribute to the ATP site; that span reads GGDT.

It belongs to the phosphoglycerate kinase family. In terms of assembly, monomer.

It is found in the cytoplasm. It catalyses the reaction (2R)-3-phosphoglycerate + ATP = (2R)-3-phospho-glyceroyl phosphate + ADP. It participates in carbohydrate degradation; glycolysis; pyruvate from D-glyceraldehyde 3-phosphate: step 2/5. This Tropheryma whipplei (strain TW08/27) (Whipple's bacillus) protein is Phosphoglycerate kinase.